Consider the following 183-residue polypeptide: Adenylate kinase (183 aa).

12–17 (GAGKGT) lines the ATP pocket. The segment at 32 to 61 (STGDLLRSEVAAGSELGKEAEAVMNRGELV) is NMP. AMP is bound by residues T33, R38, 59-61 (ELV), 86-89 (GFPR), and Q93. Residues 127–133 (SRGRADD) form an LID region. ATP is bound at residue R128. Residues R130 and R141 each coordinate AMP. Residue G169 participates in ATP binding.

This sequence belongs to the adenylate kinase family. Monomer.

The protein resides in the cytoplasm. It catalyses the reaction AMP + ATP = 2 ADP. It participates in purine metabolism; AMP biosynthesis via salvage pathway; AMP from ADP: step 1/1. Its function is as follows. Catalyzes the reversible transfer of the terminal phosphate group between ATP and AMP. Plays an important role in cellular energy homeostasis and in adenine nucleotide metabolism. This is Adenylate kinase from Synechococcus sp. (strain CC9902).